The primary structure comprises 216 residues: Uridine kinase (216 aa).

Position 16 to 23 (16 to 23) interacts with ATP; the sequence is GASASGKS.

This sequence belongs to the uridine kinase family.

The protein resides in the cytoplasm. It carries out the reaction uridine + ATP = UMP + ADP + H(+). The enzyme catalyses cytidine + ATP = CMP + ADP + H(+). It functions in the pathway pyrimidine metabolism; CTP biosynthesis via salvage pathway; CTP from cytidine: step 1/3. It participates in pyrimidine metabolism; UMP biosynthesis via salvage pathway; UMP from uridine: step 1/1. This chain is Uridine kinase, found in Mannheimia succiniciproducens (strain KCTC 0769BP / MBEL55E).